The sequence spans 244 residues: Phosphoadenosine 5'-phosphosulfate reductase (244 aa).

Cysteine 239 serves as the catalytic Nucleophile; cysteine thiosulfonate intermediate.

The protein belongs to the PAPS reductase family. CysH subfamily.

It is found in the cytoplasm. The catalysed reaction is [thioredoxin]-disulfide + sulfite + adenosine 3',5'-bisphosphate + 2 H(+) = [thioredoxin]-dithiol + 3'-phosphoadenylyl sulfate. The protein operates within sulfur metabolism; hydrogen sulfide biosynthesis; sulfite from sulfate: step 3/3. In terms of biological role, catalyzes the formation of sulfite from phosphoadenosine 5'-phosphosulfate (PAPS) using thioredoxin as an electron donor. In Pectobacterium atrosepticum (strain SCRI 1043 / ATCC BAA-672) (Erwinia carotovora subsp. atroseptica), this protein is Phosphoadenosine 5'-phosphosulfate reductase.